The primary structure comprises 76 residues: Small ribosomal subunit protein bS18 (76 aa).

The protein belongs to the bacterial ribosomal protein bS18 family. In terms of assembly, part of the 30S ribosomal subunit. Forms a tight heterodimer with protein bS6.

Its function is as follows. Binds as a heterodimer with protein bS6 to the central domain of the 16S rRNA, where it helps stabilize the platform of the 30S subunit. This chain is Small ribosomal subunit protein bS18, found in Pseudomonas aeruginosa (strain LESB58).